The following is a 540-amino-acid chain: Ipecac alkaloid beta-glucosidase 9 (540 aa).

A beta-D-glucoside is bound by residues glutamine 36, histidine 140, 185-186 (NE), tyrosine 350, glutamate 421, tryptophan 470, and phenylalanine 486. Glutamate 186 serves as the catalytic Proton donor. The Nucleophile role is filled by glutamate 421.

It belongs to the glycosyl hydrolase 1 family.

Its subcellular location is the cytoplasm. It localises to the cytosol. It catalyses the reaction deacetylipecoside + H2O = deacetylipecoside aglycone + D-glucose. The catalysed reaction is deacetylisoipecoside + H2O = deacetylisoipecoside aglycone + D-glucose. It participates in alkaloid biosynthesis. In terms of biological role, beta-glucosidase catalyzing deglucosylation on N-deacetylisoipecoside and N-deacetylipecoside. This is Ipecac alkaloid beta-glucosidase 9 from Carapichea ipecacuanha (Ipecac).